Consider the following 81-residue polypeptide: Photosystem I iron-sulfur center (81 aa).

4Fe-4S ferredoxin-type domains are found at residues 2-31 and 37-68; these read SHTVKIYDTCIGCTQCVRACPTDVLEMVPW and GQIASSPRVEDCVGCKRCETACPTDFLSVRVY. Cys11, Cys14, Cys17, Cys21, Cys48, Cys51, Cys54, and Cys58 together coordinate [4Fe-4S] cluster.

As to quaternary structure, the eukaryotic PSI reaction center is composed of at least 11 subunits. It depends on [4Fe-4S] cluster as a cofactor.

It is found in the plastid. The protein resides in the chloroplast thylakoid membrane. The enzyme catalyses reduced [plastocyanin] + hnu + oxidized [2Fe-2S]-[ferredoxin] = oxidized [plastocyanin] + reduced [2Fe-2S]-[ferredoxin]. In terms of biological role, apoprotein for the two 4Fe-4S centers FA and FB of photosystem I (PSI); essential for photochemical activity. FB is the terminal electron acceptor of PSI, donating electrons to ferredoxin. The C-terminus interacts with PsaA/B/D and helps assemble the protein into the PSI complex. Required for binding of PsaD and PsaE to PSI. PSI is a plastocyanin/cytochrome c6-ferredoxin oxidoreductase, converting photonic excitation into a charge separation, which transfers an electron from the donor P700 chlorophyll pair to the spectroscopically characterized acceptors A0, A1, FX, FA and FB in turn. The chain is Photosystem I iron-sulfur center from Thalassiosira pseudonana (Marine diatom).